Reading from the N-terminus, the 265-residue chain is Anamorsin homolog (265 aa).

The interval 1–147 (MDAAKMYGAV…WKIGSSFALK (147 aa)) is N-terminal SAM-like domain. Positions 147–176 (KKVVKSSPKVQIDFDSDLIDENSLLSEEDL) are linker. [2Fe-2S] cluster contacts are provided by cysteine 186, cysteine 195, cysteine 198, and cysteine 200. The fe-S binding site A stretch occupies residues 186 to 200 (CEIGPTRKACKNCSC). 4 residues coordinate [4Fe-4S] cluster: cysteine 226, cysteine 229, cysteine 237, and cysteine 240. Short sequence motifs (cx2C motif) lie at residues 226-229 (CGSC) and 237-240 (CSTC). Positions 226-240 (CGSCGLGDAFRCSTC) are fe-S binding site B.

This sequence belongs to the anamorsin family. In terms of assembly, monomer. The cofactor is [2Fe-2S] cluster. [4Fe-4S] cluster is required as a cofactor.

The protein localises to the cytoplasm. The protein resides in the mitochondrion intermembrane space. Component of the cytosolic iron-sulfur (Fe-S) protein assembly (CIA) machinery. Required for the maturation of extramitochondrial Fe-S proteins. Part of an electron transfer chain functioning in an early step of cytosolic Fe-S biogenesis, facilitating the de novo assembly of a [4Fe-4S] cluster on the cytosolic Fe-S scaffold complex. Electrons are transferred from NADPH via a FAD- and FMN-containing diflavin oxidoreductase. Together with the diflavin oxidoreductase, also required for the assembly of the diferric tyrosyl radical cofactor of ribonucleotide reductase (RNR), probably by providing electrons for reduction during radical cofactor maturation in the catalytic small subunit. The polypeptide is Anamorsin homolog (Medicago truncatula (Barrel medic)).